We begin with the raw amino-acid sequence, 404 residues long: Biflaviolin synthase CYP158A2 (404 aa).

Flaviolin is bound by residues arginine 288 and leucine 293. Cysteine 353 lines the heme pocket.

This sequence belongs to the cytochrome P450 family. It depends on heme as a cofactor.

The enzyme catalyses 2 flaviolin + 2 reduced [2Fe-2S]-[ferredoxin] + O2 + H(+) = 3,3'-biflaviolin + 2 oxidized [2Fe-2S]-[ferredoxin] + 2 H2O. It carries out the reaction 2 flaviolin + 2 reduced [2Fe-2S]-[ferredoxin] + O2 + H(+) = 3,8'-biflaviolin + 2 oxidized [2Fe-2S]-[ferredoxin] + 2 H2O. Its pathway is pigment biosynthesis. Its function is as follows. Catalyzes oxidative C-C coupling reaction to polymerize flaviolin and form highly conjugated pigments which protect the soil bacterium from deleterious effects of UV irradiation (three isomers of biflaviolin and one triflaviolin). This is Biflaviolin synthase CYP158A2 from Streptomyces coelicolor (strain ATCC BAA-471 / A3(2) / M145).